Consider the following 615-residue polypeptide: Dihydroxy-acid dehydratase (615 aa).

D81 lines the Mg(2+) pocket. C122 contacts [2Fe-2S] cluster. The Mg(2+) site is built by D123 and K124. K124 is subject to N6-carboxylysine. A [2Fe-2S] cluster-binding site is contributed by C195. E491 serves as a coordination point for Mg(2+). Residue S517 is the Proton acceptor of the active site.

It belongs to the IlvD/Edd family. As to quaternary structure, homodimer. It depends on [2Fe-2S] cluster as a cofactor. Mg(2+) is required as a cofactor.

It carries out the reaction (2R)-2,3-dihydroxy-3-methylbutanoate = 3-methyl-2-oxobutanoate + H2O. The catalysed reaction is (2R,3R)-2,3-dihydroxy-3-methylpentanoate = (S)-3-methyl-2-oxopentanoate + H2O. Its pathway is amino-acid biosynthesis; L-isoleucine biosynthesis; L-isoleucine from 2-oxobutanoate: step 3/4. It participates in amino-acid biosynthesis; L-valine biosynthesis; L-valine from pyruvate: step 3/4. Functions in the biosynthesis of branched-chain amino acids. Catalyzes the dehydration of (2R,3R)-2,3-dihydroxy-3-methylpentanoate (2,3-dihydroxy-3-methylvalerate) into 2-oxo-3-methylpentanoate (2-oxo-3-methylvalerate) and of (2R)-2,3-dihydroxy-3-methylbutanoate (2,3-dihydroxyisovalerate) into 2-oxo-3-methylbutanoate (2-oxoisovalerate), the penultimate precursor to L-isoleucine and L-valine, respectively. The polypeptide is Dihydroxy-acid dehydratase (Shewanella halifaxensis (strain HAW-EB4)).